An 877-amino-acid polypeptide reads, in one-letter code: DNA polymerase I (877 aa).

Positions 1 to 310 constitute a 5'-3' exonuclease domain; the sequence is MKKKLVLIDG…FTLADRVTEE (310 aa). A 3'-5' exonuclease domain is found at 311–465; sequence MLADKAALVV…ALERPFLDEL (155 aa). The polymerase stretch occupies residues 469–877; the sequence is EQDRLLVELE…HYGSTWYDAK (409 aa).

It belongs to the DNA polymerase type-A family. Single-chain monomer with multiple functions.

The enzyme catalyses DNA(n) + a 2'-deoxyribonucleoside 5'-triphosphate = DNA(n+1) + diphosphate. In terms of biological role, in addition to polymerase activity, this DNA polymerase exhibits 3'-5' and 5'-3' exonuclease activity. The polypeptide is DNA polymerase I (polA) (Bacillus caldotenax).